We begin with the raw amino-acid sequence, 171 residues long: MSEGSSITGVQTPGSPKDVRARDLDDIDRRILLALHDDARIPNSALAEMVGIAPSTCHGRVRRLQEIGVIRGFYTDIDPAAVGLGLQAMISVSLQSNARGKIRSFIAHIRTRPQVMDVYFLAGGDDFILHVAARDTEDLRKFVVENLNADSDVAGTQTSLIFEHLRGASPL.

Over residues 1-14 (MSEGSSITGVQTPG) the composition is skewed to polar residues. The interval 1–21 (MSEGSSITGVQTPGSPKDVRA) is disordered. Positions 24 to 85 (LDDIDRRILL…DIDPAAVGLG (62 aa)) constitute an HTH asnC-type domain. A DNA-binding region (H-T-H motif) is located at residues 43 to 62 (NSALAEMVGIAPSTCHGRVR).

In terms of assembly, homodimer in the absence of L-alanine. Homooctamer in the presence of L-alanine. Homotetramers in the presence of L-cysteine.

In the presence of alanine, AldR changes its quaternary structure from a homodimer to an octamer with an open-ring conformation. The binding affinity of AldR for the ald control region is increased significantly by L-alanine. In vitro, L-cysteine also increases the binding affinity of AldR for the target DNA. Functionally, transcriptional regulator that might play a role under hypoxic conditions. Regulates the expression of ald, which encodes L-alanine dehydrogenase. Serves as both an activator for ald expression in the presence of L-alanine and a repressor in the absence of L-alanine. Acts by binding directly to the upstream region of the ald gene. Four AldR-binding sites (O2, O1, O4 and O3) were identified upstream of the ald gene. O2, O1 and O4 are required for the induction of ald expression by alanine, while O3 is directly involved in the repression of ald expression, by occluding the access of RNA polymerase to the ald promoter. In addition to O3, both O1 and O4 are also necessary for full repression of ald expression in the absence of alanine. The chain is HTH-type transcriptional regulator AldR from Mycolicibacterium smegmatis (strain ATCC 700084 / mc(2)155) (Mycobacterium smegmatis).